We begin with the raw amino-acid sequence, 211 residues long: RNA chaperone ProQ (211 aa).

The disordered stretch occupies residues 113 to 147 (RRAVEKANNPKANKKRSVYHSGNKSENKKSAGKKF).

The protein belongs to the ProQ family.

The protein localises to the cytoplasm. Its function is as follows. RNA chaperone with significant RNA binding, RNA strand exchange and RNA duplexing activities. This Histophilus somni (strain 129Pt) (Haemophilus somnus) protein is RNA chaperone ProQ.